The primary structure comprises 229 residues: PKHD-type hydroxylase Rpal_3968 (229 aa).

Positions 78–180 (QIFPPLFNRY…RVASFFWLQS (103 aa)) constitute a Fe2OG dioxygenase domain. Residues H98, D100, and H161 each coordinate Fe cation. R171 contributes to the 2-oxoglutarate binding site.

Fe(2+) serves as cofactor. Requires L-ascorbate as cofactor.

This chain is PKHD-type hydroxylase Rpal_3968, found in Rhodopseudomonas palustris (strain TIE-1).